A 176-amino-acid chain; its full sequence is Small ribosomal subunit protein bS6 (176 aa).

The disordered stretch occupies residues aspartate 97–glutamate 176. Over residues alanine 140 to valine 160 the composition is skewed to low complexity. A compositionally biased stretch (acidic residues) spans aspartate 161 to glutamate 176.

This sequence belongs to the bacterial ribosomal protein bS6 family.

Functionally, binds together with bS18 to 16S ribosomal RNA. The polypeptide is Small ribosomal subunit protein bS6 (Gloeothece citriformis (strain PCC 7424) (Cyanothece sp. (strain PCC 7424))).